A 462-amino-acid chain; its full sequence is Serine--tRNA ligase, cytoplasmic (462 aa).

L-serine is bound at residue 246 to 248 (TSE). ATP contacts are provided by residues 279-281 (RRE) and valine 295. Glutamate 302 provides a ligand contact to L-serine. 366 to 369 (ELVS) contacts ATP. L-serine is bound at residue threonine 404.

The protein belongs to the class-II aminoacyl-tRNA synthetase family. Type-1 seryl-tRNA synthetase subfamily. Homodimer. The tRNA molecule binds across the dimer.

Its subcellular location is the cytoplasm. It localises to the cytosol. The catalysed reaction is tRNA(Ser) + L-serine + ATP = L-seryl-tRNA(Ser) + AMP + diphosphate + H(+). Catalyzes the attachment of serine to tRNA(Ser) in a two-step reaction: serine is first activated by ATP to form Ser-AMP and then transferred to the acceptor end of tRNA(Ser). This Candida albicans (strain SC5314 / ATCC MYA-2876) (Yeast) protein is Serine--tRNA ligase, cytoplasmic (SES1).